The sequence spans 339 residues: Heme A synthase (339 aa).

The next 8 helical transmembrane spans lie at 7 to 27, 92 to 112, 126 to 146, 159 to 179, 199 to 219, 254 to 274, 291 to 311, and 312 to 332; these read VIIW…VGGI, HRFI…YFLI, ILLG…KSGL, LHLT…LDLI, AIII…AGLI, VQFV…FLTF, ALLI…LYSV, and PLWL…TTTY. His-258 contacts heme. His-319 lines the heme pocket.

This sequence belongs to the COX15/CtaA family. Type 2 subfamily. Interacts with CtaB. Requires heme b as cofactor.

It is found in the cell membrane. It carries out the reaction Fe(II)-heme o + 2 A + H2O = Fe(II)-heme a + 2 AH2. It participates in porphyrin-containing compound metabolism; heme A biosynthesis; heme A from heme O: step 1/1. In terms of biological role, catalyzes the conversion of heme O to heme A by two successive hydroxylations of the methyl group at C8. The first hydroxylation forms heme I, the second hydroxylation results in an unstable dihydroxymethyl group, which spontaneously dehydrates, resulting in the formyl group of heme A. This is Heme A synthase from Flavobacterium psychrophilum (strain ATCC 49511 / DSM 21280 / CIP 103535 / JIP02/86).